The chain runs to 88 residues: Small ribosomal subunit protein uS15 (88 aa).

The protein belongs to the universal ribosomal protein uS15 family. Part of the 30S ribosomal subunit. Forms a bridge to the 50S subunit in the 70S ribosome, contacting the 23S rRNA.

Functionally, one of the primary rRNA binding proteins, it binds directly to 16S rRNA where it helps nucleate assembly of the platform of the 30S subunit by binding and bridging several RNA helices of the 16S rRNA. In terms of biological role, forms an intersubunit bridge (bridge B4) with the 23S rRNA of the 50S subunit in the ribosome. This is Small ribosomal subunit protein uS15 from Albidiferax ferrireducens (strain ATCC BAA-621 / DSM 15236 / T118) (Rhodoferax ferrireducens).